Consider the following 279-residue polypeptide: UPF0276 protein SO_2008 (279 aa).

This sequence belongs to the UPF0276 family.

This Shewanella oneidensis (strain ATCC 700550 / JCM 31522 / CIP 106686 / LMG 19005 / NCIMB 14063 / MR-1) protein is UPF0276 protein SO_2008.